The following is a 474-amino-acid chain: tRNA-2-methylthio-N(6)-dimethylallyladenosine synthase (474 aa).

In terms of domain architecture, MTTase N-terminal spans 3 to 120; the sequence is KKLHIKTWGC…LPEMINSVRG (118 aa). Positions 12, 49, 83, 157, 161, and 164 each coordinate [4Fe-4S] cluster. Residues 143-375 enclose the Radical SAM core domain; the sequence is RAEGPTAFVS…QERINQQAMA (233 aa). The TRAM domain occupies 378-441; that stretch reads RRMLGTTQRI…PNSLRGKVVR (64 aa).

The protein belongs to the methylthiotransferase family. MiaB subfamily. Monomer. It depends on [4Fe-4S] cluster as a cofactor.

It is found in the cytoplasm. It carries out the reaction N(6)-dimethylallyladenosine(37) in tRNA + (sulfur carrier)-SH + AH2 + 2 S-adenosyl-L-methionine = 2-methylsulfanyl-N(6)-dimethylallyladenosine(37) in tRNA + (sulfur carrier)-H + 5'-deoxyadenosine + L-methionine + A + S-adenosyl-L-homocysteine + 2 H(+). Its function is as follows. Catalyzes the methylthiolation of N6-(dimethylallyl)adenosine (i(6)A), leading to the formation of 2-methylthio-N6-(dimethylallyl)adenosine (ms(2)i(6)A) at position 37 in tRNAs that read codons beginning with uridine. The chain is tRNA-2-methylthio-N(6)-dimethylallyladenosine synthase from Escherichia coli (strain SE11).